The primary structure comprises 260 residues: Phosphate import ATP-binding protein PstB (260 aa).

Residues 14-255 (IETENLSLFY…PKNTKTEEYI (242 aa)) enclose the ABC transporter domain. An ATP-binding site is contributed by 46–53 (GPSGCGKS).

It belongs to the ABC transporter superfamily. Phosphate importer (TC 3.A.1.7) family. The complex is composed of two ATP-binding proteins (PstB), two transmembrane proteins (PstC and PstA) and a solute-binding protein (PstS).

It localises to the cell inner membrane. It catalyses the reaction phosphate(out) + ATP + H2O = ADP + 2 phosphate(in) + H(+). Its function is as follows. Part of the ABC transporter complex PstSACB involved in phosphate import. Responsible for energy coupling to the transport system. This chain is Phosphate import ATP-binding protein PstB, found in Borrelia garinii subsp. bavariensis (strain ATCC BAA-2496 / DSM 23469 / PBi) (Borreliella bavariensis).